The sequence spans 453 residues: Homogentisate 1,2-dioxygenase (453 aa).

H306 acts as the Proton acceptor in catalysis. Fe cation is bound by residues H349 and E355. Positions 364 and 385 each coordinate homogentisate. Residue H385 coordinates Fe cation.

It belongs to the homogentisate dioxygenase family. In terms of assembly, hexamer; dimer of trimers. The cofactor is Fe cation.

The catalysed reaction is homogentisate + O2 = 4-maleylacetoacetate + H(+). Its pathway is amino-acid degradation; L-phenylalanine degradation; acetoacetate and fumarate from L-phenylalanine: step 4/6. In terms of biological role, involved in the catabolism of homogentisate (2,5-dihydroxyphenylacetate or 2,5-OH-PhAc), a central intermediate in the degradation of phenylalanine and tyrosine. Catalyzes the oxidative ring cleavage of the aromatic ring of homogentisate to yield maleylacetoacetate. The chain is Homogentisate 1,2-dioxygenase from Rhizobium etli (strain ATCC 51251 / DSM 11541 / JCM 21823 / NBRC 15573 / CFN 42).